Consider the following 226-residue polypeptide: Enolase-phosphatase E1 (226 aa).

The protein belongs to the HAD-like hydrolase superfamily. MasA/MtnC family. In terms of assembly, monomer. Mg(2+) serves as cofactor.

The enzyme catalyses 5-methylsulfanyl-2,3-dioxopentyl phosphate + H2O = 1,2-dihydroxy-5-(methylsulfanyl)pent-1-en-3-one + phosphate. It participates in amino-acid biosynthesis; L-methionine biosynthesis via salvage pathway; L-methionine from S-methyl-5-thio-alpha-D-ribose 1-phosphate: step 3/6. It functions in the pathway amino-acid biosynthesis; L-methionine biosynthesis via salvage pathway; L-methionine from S-methyl-5-thio-alpha-D-ribose 1-phosphate: step 4/6. In terms of biological role, bifunctional enzyme that catalyzes the enolization of 2,3-diketo-5-methylthiopentyl-1-phosphate (DK-MTP-1-P) into the intermediate 2-hydroxy-3-keto-5-methylthiopentenyl-1-phosphate (HK-MTPenyl-1-P), which is then dephosphorylated to form the acireductone 1,2-dihydroxy-3-keto-5-methylthiopentene (DHK-MTPene). This is Enolase-phosphatase E1 from Shewanella oneidensis (strain ATCC 700550 / JCM 31522 / CIP 106686 / LMG 19005 / NCIMB 14063 / MR-1).